The primary structure comprises 419 residues: Protein distal antenna-related (419 aa).

An HTH psq-type domain is found at 15-66 (TRGKRPLRNLTPNDKVRAIQRIHNGETKASVSRDIGVPESTLRGWCKNEQKL). A DNA-binding region (H-T-H motif) is located at residues 42-62 (KASVSRDIGVPESTLRGWCKN). Disordered stretches follow at residues 333–359 (QPGG…PDLE) and 378–419 (EASN…DAEQ).

In terms of assembly, interacts with itself, dan, ey and dac to form a complex (or complexes) containing the RD factors. Coexpressed with dan in the presumptive distal antenna, but not in the leg imaginal disk. Both proteins are also expressed in the brain and the eye region of the eye-antenna disk. First detected in early L3 eye disks in cells surrounding the newly initiated morphogenetic furrow. Highly expressed in evenly spaced clusters of cells anterior to the furrow, lower levels within and posterior to the furrow.

The protein resides in the nucleus. In terms of biological role, probable transcription factor with a role in the retinal determination (RD) network. Regulates ato expression and is required for normal R8 induction and differentiation. Danr appears to repress Dan expression, but Dan is required for Danr expression anterior to the morphogenetic furrow (MF). Dan and Danr lie downstream of so and require dac function for highest levels of expression. Contributes to differentiation of antenna-specific characteristics; effector gene that acts downstream of homothorax (hth), Distal-less (Dll), cut (ct) and spineless (ss) genes to control differentiation of distal antennal structures. In Drosophila melanogaster (Fruit fly), this protein is Protein distal antenna-related.